The following is a 611-amino-acid chain: Chaperone protein DnaK (611 aa).

Thr173 bears the Phosphothreonine; by autocatalysis mark. The segment covering 579–592 has biased composition (low complexity); it reads AAGQAEGAQGAQDA. The segment at 579–598 is disordered; it reads AAGQAEGAQGAQDAGAKKDN.

This sequence belongs to the heat shock protein 70 family.

Its function is as follows. Acts as a chaperone. The chain is Chaperone protein DnaK from Bacillus cereus (strain B4264).